A 354-amino-acid polypeptide reads, in one-letter code: Guanine nucleotide-binding protein G(t) subunit alpha-3 (354 aa).

The interval 1-27 (MGSGISSESKESAKRSKELEKKLQEDA) is disordered. A lipid anchor (N-myristoyl glycine) is attached at Gly-2. Basic and acidic residues predominate over residues 8–27 (ESKESAKRSKELEKKLQEDA). The G-alpha domain occupies 32 to 354 (RTVKLLLLGA…KENLKDCGLF (323 aa)). A G1 motif region spans residues 35-48 (KLLLLGAGESGKST). Residues 40–47 (GAGESGKS), 175–181 (LHSRVKT), 200–204 (DVGGQ), 269–272 (NKKD), and Ala-326 contribute to the GTP site. Positions 47 and 181 each coordinate Mg(2+). Positions 173–181 (DVLHSRVKT) are G2 motif. Positions 196–205 (FRMFDVGGQR) are G3 motif. The G4 motif stretch occupies residues 265–272 (VLFLNKKD). Residues 324–329 (TCATDT) are G5 motif.

The protein belongs to the G-alpha family. G(i/o/t/z) subfamily. As to quaternary structure, g proteins are composed of 3 units; alpha, beta and gamma, respectively GNAT3, GNB1 and GNG13 for Gustducin heterotrimer for bitter taste transduction. The alpha chain contains the guanine nucleotide binding site. Component of the TAS2R14-GNAT3 complex, consisting of TAS2R14, GNAT3, GNB1 and GNG2; within the complex interacts with TAS2R14; this complex plays a role in the perception of bitterness. Gustducin heterotrimer may also be composed of GNAT3, GNB3 and GNG13. In terms of processing, potential N-myristoylation may anchor alpha-subunit to the inner surface of plasma membrane. In terms of tissue distribution, expressed in taste buds (sensory organs of clustered epithelial cells) of the circumvallate, foliate and fungiform papillae of the tongue, as well as in nasoincisor, palatal and epiglottal taste buds at protein level. Expressed in enteroendocrine of the gut, in the lumenal pole of a subset of brush cells lining the stomach and the intestine at protein level. Detected in solitary cells throughout the respiratory track. Expressed also in spermatozoa.

The protein resides in the cytoplasm. Its function is as follows. Guanine nucleotide-binding protein (G protein) alpha subunit playing a prominent role in bitter and sweet taste transduction as well as in umami (monosodium glutamate, monopotassium glutamate, and inosine monophosphate) taste transduction. Transduction by this alpha subunit involves coupling of specific cell-surface receptors with a cGMP-phosphodiesterase; Activation of phosphodiesterase lowers intracellular levels of cAMP and cGMP which may open a cyclic nucleotide-suppressible cation channel leading to influx of calcium, ultimately leading to release of neurotransmitter. Indeed, denatonium and strychnine induce transient reduction in cAMP and cGMP in taste tissue, whereas this decrease is inhibited by GNAT3 antibody. Gustducin heterotrimer transduces response to bitter and sweet compounds via regulation of phosphodiesterase for alpha subunit, as well as via activation of phospholipase C for beta and gamma subunits, with ultimate increase inositol trisphosphate and increase of intracellular Calcium. GNAT3 can functionally couple to taste receptors to transmit intracellular signal: receptor heterodimer TAS1R2/TAS1R3 senses sweetness and TAS1R1/TAS1R3 transduces umami taste, whereas the T2R family GPCRs act as bitter sensors. Also functions as lumenal sugar sensors in the gut to control the expression of the Na+-glucose transporter SGLT1 in response to dietaty sugar, as well as the secretion of Glucagon-like peptide-1, GLP-1 and glucose-dependent insulinotropic polypeptide, GIP. Thus, may modulate the gut capacity to absorb sugars, with implications for the prevention and treatment of malabsorption syndromes and diet-related disorders including diabetes and obesity. The protein is Guanine nucleotide-binding protein G(t) subunit alpha-3 (Gnat3) of Rattus norvegicus (Rat).